A 136-amino-acid chain; its full sequence is MALTKQTARKSTGGKAPRKQLATKATRKSAPSTGGVKKPHRYRPGTVALREIRRYQKSTELLIRKLPFQRLVREIAQDFKTDLRFQSAAIGALQEASEAYLVGLFEDTNLCAIHAKRVTIMPKDIQLARRIRGERA.

The segment covering 1–10 (MALTKQTARK) has biased composition (polar residues). The tract at residues 1 to 44 (MALTKQTARKSTGGKAPRKQLATKATRKSAPSTGGVKKPHRYRP) is disordered. Thr4 carries the post-translational modification Phosphothreonine; by HASPIN. Position 5 is an allysine; alternate (Lys5). An N6,N6,N6-trimethyllysine; alternate modification is found at Lys5. Lys5 bears the N6,N6-dimethyllysine; alternate mark. The residue at position 5 (Lys5) is an N6-(2-hydroxyisobutyryl)lysine; alternate. Lys5 carries the N6-(beta-hydroxybutyryl)lysine; alternate modification. Lys5 carries the post-translational modification N6-acetyllysine; alternate. N6-methyllysine; alternate is present on Lys5. The residue at position 6 (Gln6) is a 5-glutamyl dopamine; alternate. 5-glutamyl serotonin; alternate is present on Gln6. The residue at position 7 (Thr7) is a Phosphothreonine; by PKC. A Citrulline; alternate modification is found at Arg9. Arg9 carries the post-translational modification Symmetric dimethylarginine; by PRMT5; alternate. Lys10 is modified (N6,N6,N6-trimethyllysine; alternate). At Lys10 the chain carries N6,N6-dimethyllysine; alternate. An N6-(2-hydroxyisobutyryl)lysine; alternate modification is found at Lys10. At Lys10 the chain carries N6-(beta-hydroxybutyryl)lysine; alternate. Lys10 is subject to N6-acetyllysine; alternate. Position 10 is an N6-methyllysine; alternate (Lys10). The residue at position 10 (Lys10) is an N6-lactoyllysine; alternate. ADP-ribosylserine; alternate is present on Ser11. At Ser11 the chain carries Phosphoserine; alternate; by AURKB, AURKC, RPS6KA3, RPS6KA4 and RPS6KA5. Thr12 is modified (phosphothreonine; by PKC). N6-(2-hydroxyisobutyryl)lysine; alternate is present on Lys15. Residue Lys15 is modified to N6-(beta-hydroxybutyryl)lysine; alternate. Residue Lys15 is modified to N6-acetyllysine; alternate. The residue at position 15 (Lys15) is an N6-lactoyllysine; alternate. Lys15 bears the N6-glutaryllysine; alternate mark. N6-succinyllysine; alternate is present on Lys15. Arg18 is subject to Citrulline; alternate. An Asymmetric dimethylarginine; by CARM1; alternate modification is found at Arg18. N6-(2-hydroxyisobutyryl)lysine; alternate occurs at positions 19 and 24. Residues Lys19 and Lys24 each carry the N6-(beta-hydroxybutyryl)lysine; alternate modification. N6-acetyllysine; alternate occurs at positions 19 and 24. N6-methyllysine; alternate occurs at positions 19 and 24. Lys19 and Lys24 each carry N6-lactoyllysine; alternate. 2 positions are modified to N6-glutaryllysine; alternate: Lys19 and Lys24. An N6-butyryllysine; alternate mark is found at Lys19 and Lys24. Arg27 carries the post-translational modification Citrulline. Lys28 carries the post-translational modification N6,N6,N6-trimethyllysine; alternate. Lys28 carries the post-translational modification N6,N6-dimethyllysine; alternate. Lys28 carries the N6-(2-hydroxyisobutyryl)lysine; alternate modification. An N6-acetyllysine; alternate modification is found at Lys28. An N6-methyllysine; alternate modification is found at Lys28. An N6-lactoyllysine; alternate modification is found at Lys28. Lys28 bears the N6-glutaryllysine; alternate mark. Position 29 is an ADP-ribosylserine; alternate (Ser29). The residue at position 29 (Ser29) is a Phosphoserine; alternate; by AURKB, AURKC and RPS6KA5. Residue Ser32 is modified to Phosphoserine. Residue Lys37 is modified to N6,N6,N6-trimethyllysine; alternate. N6,N6-dimethyllysine; alternate is present on Lys37. An N6-(2-hydroxyisobutyryl)lysine; alternate modification is found at Lys37. N6-acetyllysine; alternate is present on Lys37. Lys37 bears the N6-methyllysine; alternate mark. Position 38 is an N6-methyllysine (Lys38). Tyr42 carries the phosphotyrosine modification. Lys57 carries the N6,N6,N6-trimethyllysine; alternate modification. Position 57 is an N6-(2-hydroxyisobutyryl)lysine; alternate (Lys57). N6-(beta-hydroxybutyryl)lysine; alternate is present on Lys57. Lys57 carries the N6-acetyllysine; alternate modification. N6-lactoyllysine; alternate is present on Lys57. Lys57 carries the post-translational modification N6-glutaryllysine; alternate. At Lys57 the chain carries N6-succinyllysine; alternate. At Lys57 the chain carries N6-methyllysine; by EHMT2; alternate. At Ser58 the chain carries Phosphoserine. N6-(2-hydroxyisobutyryl)lysine; alternate is present on residues Lys65 and Lys80. Lys65 and Lys80 each carry N6-methyllysine; alternate. Lys80 is modified (N6,N6,N6-trimethyllysine; alternate). N6,N6-dimethyllysine; alternate is present on Lys80. Lys80 is modified (N6-acetyllysine; alternate). At Lys80 the chain carries N6-lactoyllysine; alternate. Lys80 carries the post-translational modification N6-glutaryllysine; alternate. At Lys80 the chain carries N6-succinyllysine; alternate. Thr81 carries the phosphothreonine modification. Ser87 is modified (phosphoserine). At Thr108 the chain carries Phosphothreonine. N6-acetyllysine; alternate occurs at positions 116 and 123. Lys116 and Lys123 each carry N6-glutaryllysine; alternate. Position 123 is an N6-(2-hydroxyisobutyryl)lysine; alternate (Lys123). Position 123 is an N6-methyllysine; alternate (Lys123). Residue Lys123 is modified to N6-succinyllysine; alternate.

This sequence belongs to the histone H3 family. As to quaternary structure, the nucleosome is a histone octamer containing two molecules each of H2A, H2B, H3 and H4 assembled in one H3-H4 heterotetramer and two H2A-H2B heterodimers. The octamer wraps approximately 147 bp of DNA. In terms of processing, acetylation is generally linked to gene activation. Acetylation on Lys-10 (H3K9ac) impairs methylation at Arg-9 (H3R8me2s). Acetylation on Lys-19 (H3K18ac) and Lys-24 (H3K24ac) favors methylation at Arg-18 (H3R17me). Acetylation at Lys-123 (H3K122ac) by EP300/p300 plays a central role in chromatin structure: localizes at the surface of the histone octamer and stimulates transcription, possibly by promoting nucleosome instability. Citrullination at Arg-9 (H3R8ci) and/or Arg-18 (H3R17ci) by PADI4 impairs methylation and represses transcription. Post-translationally, butyrylation of histones marks active promoters and competes with histone acetylation. It is present during late spermatogenesis. In terms of processing, asymmetric dimethylation at Arg-18 (H3R17me2a) by CARM1 is linked to gene activation. Symmetric dimethylation at Arg-9 (H3R8me2s) by PRMT5 is linked to gene repression. Methylation at Lys-5 (H3K4me), Lys-37 and Lys-80 are linked to gene activation. Methylation at Lys-5 (H3K4me) facilitates subsequent acetylation of H3 and H4. Methylation at Lys-80 is associated with DNA double-strand break (DSB) responses and is a specific target for TP53BP1. Methylation at Lys-10 (H3K9me) and Lys-28 (H3K27me) are linked to gene repression. Methylation at Lys-10 (H3K9me) is a specific target for HP1 proteins (CBX1, CBX3 and CBX5) and prevents subsequent phosphorylation at Ser-11 (H3S10ph) and acetylation of H3 and H4. Methylation at Lys-5 (H3K4me) and Lys-80 require preliminary monoubiquitination of H2B at 'Lys-120'. Methylation at Lys-10 (H3K9me) and Lys-28 (H3K27me) are enriched in inactive X chromosome chromatin. Monomethylation at Lys-57 (H3K56me1) by EHMT2/G9A in G1 phase promotes interaction with PCNA and is required for DNA replication. Post-translationally, phosphorylated at Thr-4 (H3T3ph) by HASPIN during prophase and dephosphorylated during anaphase. Phosphorylation at Ser-11 (H3S10ph) by AURKB is crucial for chromosome condensation and cell-cycle progression during mitosis and meiosis. In addition phosphorylation at Ser-11 (H3S10ph) by RPS6KA4 and RPS6KA5 is important during interphase because it enables the transcription of genes following external stimulation, like mitogens, stress, growth factors or UV irradiation and result in the activation of genes, such as c-fos and c-jun. Phosphorylation at Ser-11 (H3S10ph), which is linked to gene activation, prevents methylation at Lys-10 (H3K9me) but facilitates acetylation of H3 and H4. Phosphorylation at Ser-11 (H3S10ph) by AURKB mediates the dissociation of HP1 proteins (CBX1, CBX3 and CBX5) from heterochromatin. Phosphorylation at Ser-11 (H3S10ph) is also an essential regulatory mechanism for neoplastic cell transformation. Phosphorylated at Ser-29 (H3S28ph) by MAP3K20 isoform 1, RPS6KA5 or AURKB during mitosis or upon ultraviolet B irradiation. Phosphorylation at Thr-7 (H3T6ph) by PRKCB is a specific tag for epigenetic transcriptional activation that prevents demethylation of Lys-5 (H3K4me) by LSD1/KDM1A. At centromeres, specifically phosphorylated at Thr-12 (H3T11ph) from prophase to early anaphase, by DAPK3 and PKN1. Phosphorylation at Thr-12 (H3T11ph) by PKN1 or isoform M2 of PKM (PKM2) is a specific tag for epigenetic transcriptional activation that promotes demethylation of Lys-10 (H3K9me) by KDM4C/JMJD2C. Phosphorylation at Tyr-42 (H3Y41ph) by JAK2 promotes exclusion of CBX5 (HP1 alpha) from chromatin. In terms of processing, lysine deamination at Lys-5 (H3K4all) to form allysine is mediated by LOXL2. Allysine formation by LOXL2 only takes place on H3K4me3 and results in gene repression. Succinylation at Lys-80 (H3K79succ) by KAT2A takes place with a maximum frequency around the transcription start sites of genes. It gives a specific tag for epigenetic transcription activation. Desuccinylation at Lys-123 (H3K122succ) by SIRT7 in response to DNA damage promotes chromatin condensation and double-strand breaks (DSBs) repair. Post-translationally, serine ADP-ribosylation constitutes the primary form of ADP-ribosylation of proteins in response to DNA damage. Serine ADP-ribosylation at Ser-11 (H3S10ADPr) is mutually exclusive with phosphorylation at Ser-11 (H3S10ph) and impairs acetylation at Lys-10 (H3K9ac).

It localises to the nucleus. It is found in the chromosome. Core component of nucleosome. Nucleosomes wrap and compact DNA into chromatin, limiting DNA accessibility to the cellular machineries which require DNA as a template. Histones thereby play a central role in transcription regulation, DNA repair, DNA replication and chromosomal stability. DNA accessibility is regulated via a complex set of post-translational modifications of histones, also called histone code, and nucleosome remodeling. The sequence is that of Histone H3.3C from Mus musculus (Mouse).